Reading from the N-terminus, the 262-residue chain is 26 kDa secreted antigen (262 aa).

The N-terminal stretch at 1-21 (MSVVHKACLIALLFVSSGVAQ) is a signal peptide. ShKT domains are found at residues 23 to 57 (CMDS…CNTC) and 59 to 93 (CRDE…CGLC). 6 cysteine pairs are disulfide-bonded: cysteine 23–cysteine 57, cysteine 30–cysteine 50, cysteine 37–cysteine 54, cysteine 59–cysteine 93, cysteine 66–cysteine 86, and cysteine 73–cysteine 90.

The protein belongs to the phosphatidylethanolamine-binding protein family.

Its subcellular location is the secreted. Functionally, binds phosphatidylethanolamine. In Toxocara canis (Canine roundworm), this protein is 26 kDa secreted antigen (TES-26).